A 484-amino-acid chain; its full sequence is Aspartyl/glutamyl-tRNA(Asn/Gln) amidotransferase subunit B (484 aa).

It belongs to the GatB/GatE family. GatB subfamily. Heterotrimer of A, B and C subunits.

It catalyses the reaction L-glutamyl-tRNA(Gln) + L-glutamine + ATP + H2O = L-glutaminyl-tRNA(Gln) + L-glutamate + ADP + phosphate + H(+). The catalysed reaction is L-aspartyl-tRNA(Asn) + L-glutamine + ATP + H2O = L-asparaginyl-tRNA(Asn) + L-glutamate + ADP + phosphate + 2 H(+). Allows the formation of correctly charged Asn-tRNA(Asn) or Gln-tRNA(Gln) through the transamidation of misacylated Asp-tRNA(Asn) or Glu-tRNA(Gln) in organisms which lack either or both of asparaginyl-tRNA or glutaminyl-tRNA synthetases. The reaction takes place in the presence of glutamine and ATP through an activated phospho-Asp-tRNA(Asn) or phospho-Glu-tRNA(Gln). This is Aspartyl/glutamyl-tRNA(Asn/Gln) amidotransferase subunit B from Dechloromonas aromatica (strain RCB).